The following is a 1306-amino-acid chain: Angiotensin-converting enzyme (1306 aa).

Residues 1–28 (MGAASGRRSPPLLLPLLLLLLPPPPVIL) form the signal peptide. Residues 29-1256 (ELDPALQPGN…GLNLEEQQAR (1228 aa)) are Extracellular-facing. Peptidase M2 domains are found at residues 40 to 624 (PADE…LGWP) and 643 to 1222 (VSDE…LGWP). N-linked (GlcNAc...) asparagine glycosylation is found at N54, N74, N111, N146, and N160. C157 and C165 are joined by a disulfide. Y231 contributes to the chloride binding site. An N-linked (GlcNAc...) asparagine glycan is attached at N318. A disulfide bridge connects residues C359 and C377. Residue H390 participates in Zn(2+) binding. E391 acts as the Proton acceptor 1 in catalysis. Zn(2+) contacts are provided by H394 and E418. Residues N445 and N509 are each glycosylated (N-linked (GlcNAc...) asparagine). H520 serves as the catalytic Proton donor 1. N523 is a glycosylation site (N-linked (GlcNAc...) asparagine). R529 lines the chloride pocket. An intrachain disulfide couples C545 to C557. Residues N673, N695, N714, and N760 are each glycosylated (N-linked (GlcNAc...) asparagine). C757 and C763 form a disulfide bridge. R791 and Y829 together coordinate chloride. The N-linked (GlcNAc...) asparagine glycan is linked to N942. C957 and C975 are oxidised to a cystine. Residue H988 participates in Zn(2+) binding. Residue E989 is the Proton acceptor 2 of the active site. Residues H992 and E1016 each coordinate Zn(2+). Chloride contacts are provided by W1090 and R1094. H1118 (proton donor 2) is an active-site residue. Residue R1127 coordinates chloride. C1143 and C1155 are joined by a disulfide. N1191 and N1225 each carry an N-linked (GlcNAc...) asparagine glycan. Residues 1215-1256 (HGEKLGWPQYNWTPNSARLEGPFVGSGRVNFLGLNLEEQQAR) form a juxtamembrane stalk region. The chain crosses the membrane as a helical span at residues 1257-1277 (VGQWVLLFLGVALLVATLGLT). Residues 1278–1306 (QRLFSIRHHSLRRPHRGPQFGSEVELRHS) lie on the Cytoplasmic side of the membrane. S1299 is subject to Phosphoserine.

The protein belongs to the peptidase M2 family. In terms of assembly, monomer and homodimer; homodimerizes following binding to an inhibitor. Interacts with calmodulin (CALM1, CALM2 or CALM3); interaction takes place in the cytoplasmic region and regulates phosphorylation and proteolytic cleavage. It depends on Zn(2+) as a cofactor. The cofactor is chloride. Post-translationally, produced following proteolytic cleavage by secretase enzymes that cleave the transmembrane form in the juxtamembrane stalk region upstream of the transmembrane region. Cleavage can take place at different sites of the juxtamembrane stalk region. In terms of processing, phosphorylated by CK2 on Ser-1299; which allows membrane retention. Phosphorylated on tyrosine residues on its extracellular part, promoting cleavage by secretase enzymes and formation of the soluble form (Angiotensin-converting enzyme, soluble form).

The protein localises to the cell membrane. The protein resides in the cytoplasm. It is found in the secreted. It carries out the reaction Release of a C-terminal dipeptide, oligopeptide-|-Xaa-Yaa, when Xaa is not Pro, and Yaa is neither Asp nor Glu. Thus, conversion of angiotensin I to angiotensin II, with increase in vasoconstrictor activity, but no action on angiotensin II.. It catalyses the reaction angiotensin I + H2O = L-histidyl-L-leucine + angiotensin II. The enzyme catalyses bradykinin + H2O = L-Phe-L-Arg + bradykinin(1-7). The catalysed reaction is substance P + H2O = substance P(1-9) + L-Leu-L-Met-NH2. It carries out the reaction substance P + H2O = substance P(1-8) + Gly-L-Leu-L-Met-NH2. It catalyses the reaction substance P + H2O = L-Phe-L-Phe-Gly-L-Leu-L-Met-NH2 + substance P(1-6). The enzyme catalyses neurotensin + H2O = neurotensin(1-11) + L-isoleucyl-L-leucine. The catalysed reaction is goralatide + H2O = N-acetyl-L-seryl-L-aspartate + L-lysyl-L-proline. It carries out the reaction Met-enkephalin + H2O = L-phenylalanyl-L-methionine + L-tyrosylglycylglycine. It catalyses the reaction Leu-enkephalin + H2O = L-tyrosylglycylglycine + L-phenylalanyl-L-leucine. The enzyme catalyses Met-enkephalin-Arg-Phe + H2O = L-arginyl-L-phenylalanine + Met-enkephalin. With respect to regulation, the dipeptidyl carboxypeptidase activity is strongly activated by chloride. The dipeptidyl carboxypeptidase activity is specifically inhibited by lisinopril, captopril and enalaprilat. In terms of biological role, dipeptidyl carboxypeptidase that removes dipeptides from the C-terminus of a variety of circulating hormones, such as angiotensin I, bradykinin or enkephalins, thereby playing a key role in the regulation of blood pressure, electrolyte homeostasis or synaptic plasticity. Composed of two similar catalytic domains, each possessing a functional active site, with different selectivity for substrates. Plays a major role in the angiotensin-renin system that regulates blood pressure and sodium retention by the kidney by converting angiotensin I to angiotensin II, resulting in an increase of the vasoconstrictor activity of angiotensin. Also able to inactivate bradykinin, a potent vasodilator, and therefore enhance the blood pressure response. Acts as a regulator of synaptic transmission by mediating cleavage of neuropeptide hormones, such as substance P, neurotensin or enkephalins. Catalyzes degradation of different enkephalin neuropeptides (Met-enkephalin, Leu-enkephalin, Met-enkephalin-Arg-Phe and possibly Met-enkephalin-Arg-Gly-Leu). Acts as a regulator of synaptic plasticity in the nucleus accumbens of the brain by mediating cleavage of Met-enkephalin-Arg-Phe, a strong ligand of Mu-type opioid receptor OPRM1, into Met-enkephalin. Met-enkephalin-Arg-Phe cleavage by ACE decreases activation of OPRM1, leading to long-term synaptic potentiation of glutamate release. Also acts as a regulator of hematopoietic stem cell differentiation by mediating degradation of hemoregulatory peptide N-acetyl-SDKP (AcSDKP). Acts as a regulator of cannabinoid signaling pathway by mediating degradation of hemopressin, an antagonist peptide of the cannabinoid receptor CNR1. Involved in amyloid-beta metabolism by catalyzing degradation of Amyloid-beta protein 40 and Amyloid-beta protein 42 peptides, thereby preventing plaque formation. Catalyzes cleavage of cholecystokinin (maturation of Cholecystokinin-8 and Cholecystokinin-5) and Gonadoliberin-1 (both maturation and degradation) hormones. Degradation of hemoregulatory peptide N-acetyl-SDKP (AcSDKP) and amyloid-beta proteins is mediated by the N-terminal catalytic domain, while angiotensin I and cholecystokinin cleavage is mediated by the C-terminal catalytic region. Functionally, soluble form that is released in blood plasma and other body fluids following proteolytic cleavage in the juxtamembrane stalk region. The protein is Angiotensin-converting enzyme of Bos taurus (Bovine).